Consider the following 99-residue polypeptide: Duplicate procyclin (99 aa).

In Trypanosoma brucei brucei, this protein is Duplicate procyclin.